Here is a 475-residue protein sequence, read N- to C-terminus: Aspartyl/glutamyl-tRNA(Asn/Gln) amidotransferase subunit B (475 aa).

It belongs to the GatB/GatE family. GatB subfamily. As to quaternary structure, heterotrimer of A, B and C subunits.

It catalyses the reaction L-glutamyl-tRNA(Gln) + L-glutamine + ATP + H2O = L-glutaminyl-tRNA(Gln) + L-glutamate + ADP + phosphate + H(+). The enzyme catalyses L-aspartyl-tRNA(Asn) + L-glutamine + ATP + H2O = L-asparaginyl-tRNA(Asn) + L-glutamate + ADP + phosphate + 2 H(+). Its function is as follows. Allows the formation of correctly charged Asn-tRNA(Asn) or Gln-tRNA(Gln) through the transamidation of misacylated Asp-tRNA(Asn) or Glu-tRNA(Gln) in organisms which lack either or both of asparaginyl-tRNA or glutaminyl-tRNA synthetases. The reaction takes place in the presence of glutamine and ATP through an activated phospho-Asp-tRNA(Asn) or phospho-Glu-tRNA(Gln). This chain is Aspartyl/glutamyl-tRNA(Asn/Gln) amidotransferase subunit B, found in Staphylococcus aureus (strain COL).